A 164-amino-acid chain; its full sequence is Sorting nexin-3 (164 aa).

The PX domain maps to 40–163 (EIEVCNPKTH…VRFIQDPTFQ (124 aa)). A 1,2-diacyl-sn-glycero-3-phospho-(1D-myo-inositol-3-phosphate)-binding residues include Arg83, Ser85, Lys114, Arg120, and Arg129.

Belongs to the sorting nexin family.

It is found in the cytoplasm. Its subcellular location is the golgi apparatus membrane. It localises to the prevacuolar compartment membrane. Required for retention of late Golgi membrane proteins. Component of the retrieval machinery that functions by direct interaction with the cytosolic tails of certain TGN membrane proteins during the sorting/budding process at the prevacuolar compartment. Binds phosphatidylinositol 3-phosphate (PtdIns(P3)). The sequence is that of Sorting nexin-3 (SNX3) from Kluyveromyces lactis (strain ATCC 8585 / CBS 2359 / DSM 70799 / NBRC 1267 / NRRL Y-1140 / WM37) (Yeast).